We begin with the raw amino-acid sequence, 132 residues long: MSRKRTSPNRNVQIADQIQRDLSELIMREVKDPRIGIVTIQSVELTPDYAHAKVYFTALTGDPEKTQEALNHASGHLHNLLFKRLHIHTVPTLHFHYDQTIEKAVEMSRLIKEANSTRAKDDDEADTPAKDD.

The interval 113–132 (EANSTRAKDDDEADTPAKDD) is disordered.

Belongs to the RbfA family. Monomer. Binds 30S ribosomal subunits, but not 50S ribosomal subunits or 70S ribosomes.

The protein resides in the cytoplasm. Its function is as follows. One of several proteins that assist in the late maturation steps of the functional core of the 30S ribosomal subunit. Associates with free 30S ribosomal subunits (but not with 30S subunits that are part of 70S ribosomes or polysomes). Required for efficient processing of 16S rRNA. May interact with the 5'-terminal helix region of 16S rRNA. This is Ribosome-binding factor A from Burkholderia cenocepacia (strain HI2424).